Consider the following 250-residue polypeptide: Protein lin-28 homolog B (250 aa).

Residues 1–26 are disordered; that stretch reads MAEGGASKGGGEEPGKLPEPAEEESQ. In terms of domain architecture, CSD spans 29-102; that stretch reads RGTGHCKWFN…GLESIRVTGP (74 aa). 4 positions are modified to phosphoserine: S54, S96, S105, and S110. The segment at 98-126 is disordered; that stretch reads RVTGPGGSPCLGSERRPKGKTLQKRKPKG. The Bipartite nuclear localization signal motif lies at 112-125; the sequence is RRPKGKTLQKRKPK. The segment covering 114 to 125 has biased composition (basic residues); the sequence is PKGKTLQKRKPK. 2 CCHC-type zinc fingers span residues 127 to 144 and 149 to 166; these read DRCY…ECSL and KKCH…NCPH. Zn(2+) is bound by residues C129, C132, H137, C142, C151, C154, H159, and C164. Residues 169–250 are disordered; it reads VAQPPASSQG…GPSVQKRKKT (82 aa). Residues 173–191 show a composition bias toward polar residues; it reads PASSQGRQEAESQPCTSTL. The residue at position 203 (S203) is a Phosphoserine. A compositionally biased stretch (basic and acidic residues) spans 210–219; that stretch reads ARAEISERSG. Polar residues predominate over residues 220–231; that stretch reads RSPQEASSTKSS. Positions 239–250 match the Nucleolar localization signal motif; it reads KKGPSVQKRKKT.

This sequence belongs to the lin-28 family. In terms of tissue distribution, expressed at high levels in the placenta and, at mucher lower, in testis and fetal liver. Isoform 1 is only detected in placenta and in moderately and poorly differentiated hepatocellular carcinoma cells (at protein level). Isoform 2 is detected in fetal liver, non-tumor liver tissues, as well as well-differentiated tumor tissues (at protein level). Tends to be up-regulated in triple-negative (ER-,PR-,HER2-) breast tumors, as well as in liver, ovarian, and thyroid carcinomas.

Its subcellular location is the nucleus. The protein resides in the nucleolus. The protein localises to the cytoplasm. Functionally, suppressor of microRNA (miRNA) biogenesis, including that of let-7 and possibly of miR107, miR-143 and miR-200c. Binds primary let-7 transcripts (pri-let-7), including pri-let-7g and pri-let-7a-1, and sequester them in the nucleolus, away from the microprocessor complex, hence preventing their processing into mature miRNA. Does not act on pri-miR21. The repression of let-7 expression is required for normal development and contributes to maintain the pluripotent state of embryonic stem cells by preventing let-7-mediated differentiation. When overexpressed, recruits ZCCHC11/TUT4 uridylyltransferase to pre-let-7 transcripts, leading to their terminal uridylation and degradation. This activity might not be relevant in vivo, as LIN28B-mediated inhibition of let-7 miRNA maturation appears to be ZCCHC11-independent. Interaction with target pre-miRNAs occurs via an 5'-GGAG-3' motif in the pre-miRNA terminal loop. Mediates MYC-induced let-7 repression. When overexpressed, isoform 1 stimulates growth of the breast adenocarcinoma cell line MCF-7. Isoform 2 has no effect on cell growth. The chain is Protein lin-28 homolog B (LIN28B) from Homo sapiens (Human).